Consider the following 395-residue polypeptide: General transcription factor IIH subunit 2-like protein (395 aa).

A VWFA domain is found at 60–236; it reads HLYVVVDGSR…HYKELLTHHL (177 aa). Phosphotyrosine is present on Tyr95. The segment at 291 to 308 adopts a C4-type zinc-finger fold; it reads CPQCRAKYCELPVECKIC.

This sequence belongs to the GTF2H2 family.

It is found in the nucleus. Component of the core-TFIIH basal transcription factor involved in nucleotide excision repair (NER) of DNA and, when complexed to CAK, in RNA transcription by RNA polymerase II. This is General transcription factor IIH subunit 2-like protein (GTF2H2C) from Homo sapiens (Human).